Here is a 112-residue protein sequence, read N- to C-terminus: SRA stem-loop-interacting RNA-binding protein, mitochondrial (112 aa).

Residue S15 is modified to Phosphoserine. The RRM domain maps to 19-98; that stretch reads PIAFVRKIPW…IHVQAQRAKA (80 aa). T104 is subject to Phosphothreonine. At S105 the chain carries Phosphoserine.

Its subcellular location is the mitochondrion. It is found in the nucleus. Functionally, RNA-binding protein that acts as a nuclear receptor corepressor. Probably acts by binding the SRA RNA, and repressing the SRA-mediated nuclear receptor coactivation. Binds the STR7 loop of SRA RNA. Also able to repress glucocorticoid (GR), androgen (AR), thyroid (TR) and VDR-mediated transactivation. In Mus musculus (Mouse), this protein is SRA stem-loop-interacting RNA-binding protein, mitochondrial (Slirp).